The primary structure comprises 156 residues: Small ribosomal subunit protein uS7 (156 aa).

This sequence belongs to the universal ribosomal protein uS7 family. As to quaternary structure, part of the 30S ribosomal subunit. Contacts proteins S9 and S11.

One of the primary rRNA binding proteins, it binds directly to 16S rRNA where it nucleates assembly of the head domain of the 30S subunit. Is located at the subunit interface close to the decoding center, probably blocks exit of the E-site tRNA. The sequence is that of Small ribosomal subunit protein uS7 from Hahella chejuensis (strain KCTC 2396).